A 961-amino-acid chain; its full sequence is Endochitinase A (961 aa).

Positions 1 to 21 (MAPKLFTFVSALSGLASLASA) are cleaved as a signal peptide. A GH18 domain is found at 28–339 (SNIAVYYGQG…EKIREILYDL (312 aa)). The active-site Proton donor is glutamate 175. Disordered regions lie at residues 338 to 720 (DLDP…TTTE), 767 to 787 (TDVP…TADI), 813 to 842 (PPAT…GEVS), and 912 to 933 (HVPV…ASPT). Positions 342–355 (NHPPPTTSPTPTPT) are enriched in pro residues. 4 stretches are compositionally biased toward low complexity: residues 356-510 (PSTT…STSS), 519-544 (SSTS…PVIS), 552-604 (TSSS…PETT), and 612-635 (TPGS…PATS). Over residues 636-665 (GGHTETSTVSTSSANQTPSASTSKPLIPTN) the composition is skewed to polar residues. Over residues 666–720 (SASSTSTGSVTSTPSAPGVPSSSAGSDETATTSTTDSEPTSTSSGSVTAKPTTTE) the composition is skewed to low complexity. Residue glycine 936 is the site of GPI-anchor amidated glycine attachment. Residues 937–961 (AGSRYDVVKGVPALVALALSLLAVL) constitute a propeptide, removed in mature form.

It belongs to the glycosyl hydrolase 18 family. Chitinase class III subfamily. O-glycosylated but not N-glycosylated.

The protein resides in the cell membrane. It is found in the secreted. It localises to the cell wall. Its subcellular location is the cell tip. The enzyme catalyses Random endo-hydrolysis of N-acetyl-beta-D-glucosaminide (1-&gt;4)-beta-linkages in chitin and chitodextrins.. GPI-anchored chitinase involved in the degradation of chitin, a component of the cell walls of fungi and exoskeletal elements of some animals (including worms and arthropods). Required to reshape the cell wall at the sites where cell wall remodeling and/or cell wall maturation actively take place such as sites of conidia formation. The protein is Endochitinase A (chiA) of Emericella nidulans (Aspergillus nidulans).